The chain runs to 351 residues: UDP-N-acetylenolpyruvoylglucosamine reductase (351 aa).

One can recognise an FAD-binding PCMH-type domain in the interval H25 to L196. R173 is a catalytic residue. Catalysis depends on S246, which acts as the Proton donor. Residue E343 is part of the active site.

It belongs to the MurB family. It depends on FAD as a cofactor.

It localises to the cytoplasm. The enzyme catalyses UDP-N-acetyl-alpha-D-muramate + NADP(+) = UDP-N-acetyl-3-O-(1-carboxyvinyl)-alpha-D-glucosamine + NADPH + H(+). Its pathway is cell wall biogenesis; peptidoglycan biosynthesis. Cell wall formation. The polypeptide is UDP-N-acetylenolpyruvoylglucosamine reductase (Xylella fastidiosa (strain 9a5c)).